The primary structure comprises 114 residues: Fatty acid-binding protein, liver (114 aa).

It belongs to the calycin superfamily. Fatty-acid binding protein (FABP) family. The N-terminus is blocked.

The protein resides in the cytoplasm. In terms of biological role, FABPs are thought to play a role in the intracellular transport of long-chain fatty acids and their acyl-CoA esters. This is Fatty acid-binding protein, liver from Lethenteron camtschaticum (Japanese lamprey).